Consider the following 279-residue polypeptide: Proto-oncogene FRAT1 (279 aa).

Disordered regions lie at residues 1–24 (MPCR…EEDS) and 56–76 (AQHS…APGP). Acidic residues predominate over residues 7–24 (EEEEAGEEAEGEEEEEDS). Ser-88 carries the phosphoserine modification. Disordered stretches follow at residues 136–200 (GPSA…DDPH) and 228–279 (RAKL…VPGS). Positions 198–220 (DPHRLLQQLVLSGNLIKEAVRRL) are involved in GSK-3 binding. Residues Ser-249 and Ser-252 each carry the phosphoserine modification.

Belongs to the GSK-3-binding protein family. As to quaternary structure, binds DVL1. Binds GSK-3 and prevent GSK-3-dependent phosphorylation. Phosphorylated.

Its subcellular location is the cytoplasm. Positively regulates the Wnt signaling pathway by stabilizing beta-catenin through the association with GSK-3. May play a role in tumor progression and collaborate with PIM1 and MYC in lymphomagenesis. The protein is Proto-oncogene FRAT1 (FRAT1) of Homo sapiens (Human).